The primary structure comprises 659 residues: Protein SCARECROW 1 (659 aa).

Disordered stretches follow at residues 1 to 33 (MGSSSLLLFPSSSSSATHSSYSPSSSSHAITSL) and 188 to 285 (SDPA…KQRD). A compositionally biased stretch (pro residues) spans 190 to 228 (PAPPPPPPPSHPALLPPDATAPPPPPTSVAALPPPPPPQ). Over residues 258 to 271 (AAAAAAAAAAALAA) the composition is skewed to low complexity. A coiled-coil region spans residues 258 to 289 (AAAAAAAAAAALAAAKERKEEQRRKQRDEEGL). A compositionally biased stretch (basic and acidic residues) spans 272-285 (AKERKEEQRRKQRD). Residues 282-652 (KQRDEEGLHL…LCLLTASAWR (371 aa)) enclose the GRAS domain. The leucine repeat I (LRI) stretch occupies residues 289-353 (LHLLTLLLQC…VSSCLGLYAP (65 aa)). A LxCxE motif motif is present at residues 296–300 (LQCAE). The interval 372–437 (FQVFNGISPF…GGPPRVRLTG (66 aa)) is VHIID. The short motif at 403-407 (VHIID) is the VHIID element. Residues 447–479 (ATGKRLSDFADTLGLPFEFCPVADKAGNLDPEK) are leucine repeat II (LRII). Residues 488–575 (VAVHWLRHSL…QQLLSREIRN (88 aa)) form a PFYRE region. The SAW stretch occupies residues 578 to 652 (AVGGPARTGD…LCLLTASAWR (75 aa)).

The protein belongs to the GRAS family. In terms of assembly, interacts with SHR1, but not with SHR2.

Its subcellular location is the nucleus. In terms of biological role, transcription factor required for quiescent center cells specification and maintenance of surrounding stem cells, and for the asymmetric cell division involved in radial pattern formation in roots. Essential for cell division but not differentiation of the ground tissue. Regulates the radial organization of the shoot axial organs. Restricts SHR movment and sequesters it into the nucleus of the endodermis. In Oryza sativa subsp. indica (Rice), this protein is Protein SCARECROW 1 (SCR1).